A 279-amino-acid polypeptide reads, in one-letter code: Zinc finger CCCH domain-containing protein 42 (279 aa).

Residues 11 to 77 form a disordered region; sequence SDHRSSSTPM…KAAVEPQEYP (67 aa). Residues 16 to 39 show a composition bias toward low complexity; that stretch reads SSTPMATTTSSSASDPAAISPTPS. 3 C3H1-type zinc fingers span residues 79-107, 120-148, and 186-214; these read RPGV…HPAK, RPGE…HPPD, and RPGT…HPNS.

This chain is Zinc finger CCCH domain-containing protein 42, found in Oryza sativa subsp. japonica (Rice).